Reading from the N-terminus, the 353-residue chain is Colistin resistance protein EmrA (353 aa).

Residues 21 to 41 (WGVFSVLLLFLVAGILYYFFV) form a helical membrane-spanning segment. Residues 132-204 (VVAAQADLAR…QASRAQLLAD (73 aa)) adopt a coiled-coil conformation.

Belongs to the membrane fusion protein (MFP) (TC 8.A.1) family.

The protein resides in the cell inner membrane. Functionally, probably part of an efflux pump system that contributes to adaptation to osmotic stress and resistance to colistin. In Acinetobacter baumannii (strain ATCC 17978 / DSM 105126 / CIP 53.77 / LMG 1025 / NCDC KC755 / 5377), this protein is Colistin resistance protein EmrA.